The chain runs to 957 residues: Glycine dehydrogenase (decarboxylating) (957 aa).

Lysine 708 carries the N6-(pyridoxal phosphate)lysine modification.

The protein belongs to the GcvP family. The glycine cleavage system is composed of four proteins: P, T, L and H. It depends on pyridoxal 5'-phosphate as a cofactor.

It catalyses the reaction N(6)-[(R)-lipoyl]-L-lysyl-[glycine-cleavage complex H protein] + glycine + H(+) = N(6)-[(R)-S(8)-aminomethyldihydrolipoyl]-L-lysyl-[glycine-cleavage complex H protein] + CO2. Functionally, the glycine cleavage system catalyzes the degradation of glycine. The P protein binds the alpha-amino group of glycine through its pyridoxal phosphate cofactor; CO(2) is released and the remaining methylamine moiety is then transferred to the lipoamide cofactor of the H protein. The polypeptide is Glycine dehydrogenase (decarboxylating) (Escherichia coli O81 (strain ED1a)).